A 192-amino-acid chain; its full sequence is Thymidine kinase (192 aa).

Residues 9-16 and 85-88 each bind ATP; these read GAMNSGKS and DEVQ. Glutamate 86 serves as the catalytic Proton acceptor. 4 residues coordinate Zn(2+): cysteine 143, cysteine 146, cysteine 181, and cysteine 184.

The protein belongs to the thymidine kinase family. As to quaternary structure, homotetramer.

The protein resides in the cytoplasm. It carries out the reaction thymidine + ATP = dTMP + ADP + H(+). This Shouchella clausii (strain KSM-K16) (Alkalihalobacillus clausii) protein is Thymidine kinase.